Consider the following 1029-residue polypeptide: Sodium/potassium-transporting ATPase subunit alpha-4 (1029 aa).

Positions 1 to 37 (MGLWGKKGTVAPHDQSPRRRPKKGLIKKKMVKREKQK) are disordered. Residues 1-95 (MGLWGKKGTV…NTVTPPPTTP (95 aa)) lie on the Cytoplasmic side of the membrane. Basic residues predominate over residues 18–36 (RRRPKKGLIKKKMVKREKQ). The tract at residues 90-92 (PPP) is interaction with phosphoinositide-3 kinase. Residues 96–116 (EWVKFCKQLFGGFSLLLWTGA) traverse the membrane as a helical segment. Over 117–139 (ILCFVAYSIQIYFNEEPTKDNLY) the chain is Extracellular. The helical transmembrane segment at 140–160 (LSIVLSVVVIVTGCFSYYQEA) threads the bilayer. Residues 161-296 (KSSKIMESFK…VGQTPIAAEI (136 aa)) lie on the Cytoplasmic side of the membrane. Over residues 223–237 (NSSLTGESEPQSRSP) the composition is skewed to polar residues. Residues 223 to 242 (NSSLTGESEPQSRSPDFTHE) are disordered. Residues 297 to 316 (EHFIHLITVVAVFLGVTFFA) traverse the membrane as a helical segment. The Extracellular portion of the chain corresponds to 317-328 (LSLLLGYGWLEA). A helical transmembrane segment spans residues 329–346 (IIFLIGIIVANVPEGLLA). At 347-778 (TVTVCLTLTA…EEGRLIFDNL (432 aa)) the chain is on the cytoplasmic side. Asp384 functions as the 4-aspartylphosphate intermediate in the catalytic mechanism. Mg(2+) contacts are provided by Asp723 and Asp727. Residues 779–798 (KKSIMYTLTSNIPEITPFLM) traverse the membrane as a helical segment. Residues 799 to 808 (FIILGIPLPL) lie on the Extracellular side of the membrane. The chain crosses the membrane as a helical span at residues 809-829 (GTITILCIDLGTDMVPAISLA). At 830–849 (YESAESDIMKRLPRNPKTDN) the chain is on the cytoplasmic side. The helical transmembrane segment at 850 to 872 (LVNHRLIGMAYGQIGMIQALAGF) threads the bilayer. Over 873-924 (FTYFVILAENGFRPVDLLGIRLHWEDKYLNDLEDSYGQQWTYEQRKVVEFTC) the chain is Extracellular. A helical transmembrane segment spans residues 925-944 (QTAFFVTIVVVQWADLIISK). Residues 945-957 (TRRNSLFQQGMRN) are Cytoplasmic-facing. A Phosphoserine; by PKA modification is found at Ser949. The helical transmembrane segment at 958–976 (KVLIFGILEETLLAAFLSY) threads the bilayer. Residues 977 to 991 (TPGMDVALRMYPLKI) lie on the Extracellular side of the membrane. Residues 992 to 1012 (TWWLCAIPYSILIFVYDEIRK) form a helical membrane-spanning segment. Residues 1013–1029 (LLIRQHPDGWVERETYY) are Cytoplasmic-facing.

The protein belongs to the cation transport ATPase (P-type) (TC 3.A.3) family. Type IIC subfamily. In terms of assembly, the sodium/potassium-transporting ATPase is composed of a catalytic alpha subunit, an auxiliary non-catalytic beta subunit and an additional regulatory subunit. In terms of tissue distribution, specifically expressed in testis. Found in very low levels in skeletal muscle. Expressed in mature sperm (at protein level).

It is found in the cell membrane. The catalysed reaction is K(+)(out) + Na(+)(in) + ATP + H2O = K(+)(in) + Na(+)(out) + ADP + phosphate + H(+). Specifically inhibited by an endogenous cardiac glycoside, ouabain. Functionally, this is the catalytic component of the active enzyme, which catalyzes the hydrolysis of ATP coupled with the exchange of sodium and potassium ions across the plasma membrane. This action creates the electrochemical gradient of sodium and potassium ions, providing the energy for active transport of various nutrients. Plays a role in sperm motility. This Homo sapiens (Human) protein is Sodium/potassium-transporting ATPase subunit alpha-4.